Reading from the N-terminus, the 205-residue chain is Ribosomal RNA large subunit methyltransferase E (205 aa).

Residues Gly60, Trp62, Asp80, Asp96, and Asp121 each contribute to the S-adenosyl-L-methionine site. Lys161 serves as the catalytic Proton acceptor.

It belongs to the class I-like SAM-binding methyltransferase superfamily. RNA methyltransferase RlmE family.

The protein resides in the cytoplasm. It catalyses the reaction uridine(2552) in 23S rRNA + S-adenosyl-L-methionine = 2'-O-methyluridine(2552) in 23S rRNA + S-adenosyl-L-homocysteine + H(+). Specifically methylates the uridine in position 2552 of 23S rRNA at the 2'-O position of the ribose in the fully assembled 50S ribosomal subunit. This Chromobacterium violaceum (strain ATCC 12472 / DSM 30191 / JCM 1249 / CCUG 213 / NBRC 12614 / NCIMB 9131 / NCTC 9757 / MK) protein is Ribosomal RNA large subunit methyltransferase E.